The following is a 373-amino-acid chain: XK-related protein 9 (373 aa).

8 helical membrane passes run 8-28 (FMMSVLGIIIYVTDLIVDIWV), 38-58 (YVFSALALSFMLFGTLVAQCF), 166-186 (AAIMVSCCAISWSTVDYQVAL), 203-223 (ITYLFYKLFTLLSWMLSVVLL), 224-244 (LFLNVKIALFLLLFLWLLGII), 256-276 (CISMEFLYRIVVGFILIFTFF), 295-315 (VLGTLGILTVFWVCPLTIFNP), and 318-338 (FIPISITIVLTLLLGILFLIV).

Belongs to the XK family. Post-translationally, undergoes proteolytic processing by caspase-3 (CASP3), caspase-6 (CASP6) and caspase-7 (CASP7) to generate the XK-related protein 9, processed form, leading to its activation.

The protein resides in the cell membrane. It carries out the reaction a 1,2-diacyl-sn-glycero-3-phospho-L-serine(in) = a 1,2-diacyl-sn-glycero-3-phospho-L-serine(out). Activated upon caspase cleavage to generate the XK-related protein 9, processed form. Does not act prior the onset of apoptosis. In terms of biological role, phospholipid scramblase that promotes phosphatidylserine exposure on apoptotic cell surface. Phosphatidylserine is a specific marker only present at the surface of apoptotic cells and acts as a specific signal for engulfment. The sequence is that of XK-related protein 9 from Homo sapiens (Human).